Consider the following 387-residue polypeptide: Deoxyguanosinetriphosphate triphosphohydrolase-like protein (387 aa).

The region spanning 78 to 209 (RLTHSLEVAQ…ANLADEVAYN (132 aa)) is the HD domain.

Belongs to the dGTPase family. Type 2 subfamily.

This Ralstonia nicotianae (strain ATCC BAA-1114 / GMI1000) (Ralstonia solanacearum) protein is Deoxyguanosinetriphosphate triphosphohydrolase-like protein.